Here is a 220-residue protein sequence, read N- to C-terminus: Lactate utilization protein C (220 aa).

The protein belongs to the LutC/YkgG family.

Is involved in L-lactate degradation and allows cells to grow with lactate as the sole carbon source. The protein is Lactate utilization protein C of Anoxybacillus flavithermus (strain DSM 21510 / WK1).